The primary structure comprises 475 residues: Ankyrin repeat, SAM and basic leucine zipper domain-containing protein 1 (475 aa).

The segment at M1–W25 is disordered. Phosphoserine occurs at positions 17, 18, and 20. ANK repeat units follow at residues E45 to S74, Y78 to F107, D110 to V144, R148 to T177, N181 to L210, and D214 to G243. The 63-residue stretch at S272–Q334 folds into the SAM domain.

Interacts with DDX4, PIWIL1, RANBP9 and TDRD1.

The protein resides in the cytoplasm. In terms of biological role, plays a central role during spermatogenesis by repressing transposable elements and preventing their mobilization, which is essential for the germline integrity. Acts via the piRNA metabolic process, which mediates the repression of transposable elements during meiosis by forming complexes composed of piRNAs and Piwi proteins and governs the methylation and subsequent repression of transposons. Its association with pi-bodies suggests a participation in the primary piRNAs metabolic process. Required prior to the pachytene stage to facilitate the production of multiple types of piRNAs, including those associated with repeats involved in the regulation of retrotransposons. May act by mediating protein-protein interactions during germ cell maturation. This Papio anubis (Olive baboon) protein is Ankyrin repeat, SAM and basic leucine zipper domain-containing protein 1 (ASZ1).